A 402-amino-acid polypeptide reads, in one-letter code: CCA-adding enzyme (402 aa).

ATP contacts are provided by G32 and R35. Residues G32 and R35 each coordinate CTP. Positions 45 and 47 each coordinate Mg(2+). R116, D159, R162, R165, and R168 together coordinate ATP. The CTP site is built by R116, D159, R162, R165, and R168.

The protein belongs to the tRNA nucleotidyltransferase/poly(A) polymerase family. Bacterial CCA-adding enzyme type 3 subfamily. Homodimer. It depends on Mg(2+) as a cofactor.

It carries out the reaction a tRNA precursor + 2 CTP + ATP = a tRNA with a 3' CCA end + 3 diphosphate. The catalysed reaction is a tRNA with a 3' CCA end + 2 CTP + ATP = a tRNA with a 3' CCACCA end + 3 diphosphate. Its function is as follows. Catalyzes the addition and repair of the essential 3'-terminal CCA sequence in tRNAs without using a nucleic acid template. Adds these three nucleotides in the order of C, C, and A to the tRNA nucleotide-73, using CTP and ATP as substrates and producing inorganic pyrophosphate. tRNA 3'-terminal CCA addition is required both for tRNA processing and repair. Also involved in tRNA surveillance by mediating tandem CCA addition to generate a CCACCA at the 3' terminus of unstable tRNAs. While stable tRNAs receive only 3'-terminal CCA, unstable tRNAs are marked with CCACCA and rapidly degraded. This chain is CCA-adding enzyme, found in Streptococcus pyogenes serotype M3 (strain ATCC BAA-595 / MGAS315).